A 531-amino-acid chain; its full sequence is Flavin-containing monooxygenase 3 (531 aa).

FAD contacts are provided by residues 9–13 (GAGIS), E32, 40–41 (LW), and 61–62 (NS). Residues 60 to 61 (TN) and 195 to 198 (SGCD) each bind NADP(+). The helical transmembrane segment at 511-531 (FSPWLKLLAIAVLLIAAVLVF) threads the bilayer.

The protein belongs to the FMO family. It depends on FAD as a cofactor. In terms of tissue distribution, liver.

It localises to the microsome membrane. The protein resides in the endoplasmic reticulum membrane. The enzyme catalyses trimethylamine + NADPH + O2 = trimethylamine N-oxide + NADP(+) + H2O. It carries out the reaction N,N-dimethylaniline + NADPH + O2 + H(+) = N,N-dimethylaniline N-oxide + NADP(+) + H2O. The catalysed reaction is hypotaurine + NADPH + O2 + H(+) = taurine + NADP(+) + H2O. It catalyses the reaction (S)-nicotine + NADPH + O2 = trans-(S)-nicotine N(1')-oxide + NADP(+) + H2O. The enzyme catalyses albendazole + NADPH + O2 + H(+) = albendazole S-oxide + NADP(+) + H2O. Its function is as follows. Essential hepatic enzyme that catalyzes the oxygenation of a wide variety of nitrogen- and sulfur-containing compounds including drugs as well as dietary compounds. Plays an important role in the metabolism of trimethylamine (TMA), via the production of trimethylamine N-oxide (TMAO) metabolite. TMA is generated by the action of gut microbiota using dietary precursors such as choline, choline containing compounds, betaine or L-carnitine. By regulating TMAO concentration, FMO3 directly impacts both platelet responsiveness and rate of thrombus formation. The polypeptide is Flavin-containing monooxygenase 3 (FMO3) (Oryctolagus cuniculus (Rabbit)).